We begin with the raw amino-acid sequence, 246 residues long: Myelin-oligodendrocyte glycoprotein (246 aa).

Positions 1–28 (MASLLSSSLPSCLPSLLFLLLQLTSSSA) are cleaved as a signal peptide. The Ig-like V-type domain occupies 29-144 (GQFRVIGPGH…EEAAMELKVE (116 aa)). The Extracellular portion of the chain corresponds to 29 to 153 (GQFRVIGPGH…EDPFYWINPG (125 aa)). A disulfide bridge links Cys-52 with Cys-126. An N-linked (GlcNAc...) asparagine glycan is attached at Asn-59. A helical membrane pass occupies residues 154-174 (VLVLIAVLPVLLLQITVGLVF). Residues 175 to 209 (LCLQRRLRGKLWAEIENLHRTFDPHFLMVPCWKIT) lie on the Cytoplasmic side of the membrane. The chain crosses the membrane as a helical span at residues 210 to 230 (LFVIVPVLGPLVALIICYNWL). Topologically, residues 231–246 (HRRLAGQFLEELRNPF) are extracellular.

This sequence belongs to the immunoglobulin superfamily. BTN/MOG family. As to quaternary structure, homodimer. As to expression, found exclusively in the CNS, where it is localized on the surface of myelin and oligodendrocyte cytoplasmic membranes.

The protein localises to the membrane. In terms of biological role, mediates homophilic cell-cell adhesion. Minor component of the myelin sheath. May be involved in completion and/or maintenance of the myelin sheath and in cell-cell communication. The sequence is that of Myelin-oligodendrocyte glycoprotein (MOG) from Bos taurus (Bovine).